Consider the following 314-residue polypeptide: Homoserine O-succinyltransferase (314 aa).

Cys142 serves as the catalytic Acyl-thioester intermediate. Substrate is bound by residues Lys163 and Ser192. His235 serves as the catalytic Proton acceptor. Glu237 is a catalytic residue. Arg249 contacts substrate.

This sequence belongs to the MetA family.

Its subcellular location is the cytoplasm. The catalysed reaction is L-homoserine + succinyl-CoA = O-succinyl-L-homoserine + CoA. Its pathway is amino-acid biosynthesis; L-methionine biosynthesis via de novo pathway; O-succinyl-L-homoserine from L-homoserine: step 1/1. Functionally, transfers a succinyl group from succinyl-CoA to L-homoserine, forming succinyl-L-homoserine. In Shewanella frigidimarina (strain NCIMB 400), this protein is Homoserine O-succinyltransferase.